Reading from the N-terminus, the 302-residue chain is Syntaxin-17 (302 aa).

Residue S2 is modified to N-acetylserine. The Cytoplasmic portion of the chain corresponds to 2–228; that stretch reads SEDEEKVKLR…KNLGKAAKYK (227 aa). K41 is subject to N6-acetyllysine. Positions 53 to 123 form a coiled coil; sequence EEHINAGRTV…EELKKQFNDE (71 aa). The residue at position 157 (Y157) is a Phosphotyrosine; by ABL1. One can recognise a t-SNARE coiled-coil homology domain in the interval 162–224; it reads IPRDQNAAES…EEGTKNLGKA (63 aa). A helical membrane pass occupies residues 229 to 249; sequence LAALPVAGALIGGVVGGPIGL. The tract at residues 229 to 275 is necessary and sufficient for localization to autophagosome; the sequence is LAALPVAGALIGGVVGGPIGLLAGFKVAGIAAALGGGVLGFTGGKLI. The Lumenal portion of the chain corresponds to 250–254; the sequence is LAGFK. Residues 255 to 275 form a helical membrane-spanning segment; the sequence is VAGIAAALGGGVLGFTGGKLI. Residues 276-302 are Cytoplasmic-facing; the sequence is QRRKQKMMEKLASSCPDLPSQTDKKCS. S289 bears the Phosphoserine mark. The short motif at 299-302 is the Endoplasmic reticulum retention signal element; sequence KKCS.

Belongs to the syntaxin family. As to quaternary structure, forms a SNARE complex composed of VAMP8, SNAP29 and STX17 involved in fusion of autophagosome with lysosome. May interact with VTI1B. Probably interacts with BET1, SCFD1 and SEC22B. Interacts with PTPN2 and ABL1; involved in STX17 phosphorylation. Interacts with COPB1. Interacts with TMED9 and TMED10; the interaction is direct. Interacts with VAMP7. Interacts with RUBCNL/PACER; promoting targeting of RUBCNL/PACER to autophagosome. Interacts with VAMP8, SNAP29, VPS39 and VPS41; these interactions are increased in the absence of TMEM39A. Interacts with IRGM; promoting STX17 recruitment to autophagosomes. Interacts with ATG8 proteins GABARAP and MAP1LC3B. Interacts with RNF115; this interaction enhances STX17 stability which in turn promotes autophagosome maturation. Interacts with RAB39A (GTP-bound); the interaction promotes autophagosome-lysosome membrane fusion driven by STX17-SNAP29-VAMP8. Interacts with RAB39B; the interaction may promote a different fonction in autophagy as compared with RAB39A. Phosphorylated at Tyr-157 probably by ABL1. Dephosphorylation by PTPN2; regulates exit from the endoplasmic reticulum.

Its subcellular location is the endoplasmic reticulum membrane. It is found in the smooth endoplasmic reticulum membrane. The protein resides in the endoplasmic reticulum-Golgi intermediate compartment membrane. The protein localises to the cytoplasmic vesicle. It localises to the autophagosome membrane. Its subcellular location is the COPII-coated vesicle membrane. It is found in the cytoplasm. The protein resides in the cytosol. The protein localises to the mitochondrion membrane. It localises to the autolysosome membrane. SNAREs, soluble N-ethylmaleimide-sensitive factor-attachment protein receptors, are essential proteins for fusion of cellular membranes. SNAREs localized on opposing membranes assemble to form a trans-SNARE complex, an extended, parallel four alpha-helical bundle that drives membrane fusion. STX17 is a SNARE of the autophagosome involved in autophagy through the direct control of autophagosome membrane fusion with the lysosome membrane. May also play a role in the early secretory pathway where it may maintain the architecture of the endoplasmic reticulum-Golgi intermediate compartment/ERGIC and Golgi and/or regulate transport between the endoplasmic reticulum, the ERGIC and the Golgi. This Bos taurus (Bovine) protein is Syntaxin-17.